A 176-amino-acid polypeptide reads, in one-letter code: Peptide methionine sulfoxide reductase MsrA (176 aa).

The active site involves cysteine 12.

The protein belongs to the MsrA Met sulfoxide reductase family.

The enzyme catalyses L-methionyl-[protein] + [thioredoxin]-disulfide + H2O = L-methionyl-(S)-S-oxide-[protein] + [thioredoxin]-dithiol. It carries out the reaction [thioredoxin]-disulfide + L-methionine + H2O = L-methionine (S)-S-oxide + [thioredoxin]-dithiol. Has an important function as a repair enzyme for proteins that have been inactivated by oxidation. Catalyzes the reversible oxidation-reduction of methionine sulfoxide in proteins to methionine. This chain is Peptide methionine sulfoxide reductase MsrA, found in Thermus thermophilus (strain ATCC 27634 / DSM 579 / HB8).